Here is a 352-residue protein sequence, read N- to C-terminus: N-acetyl-gamma-glutamyl-phosphate reductase (352 aa).

The active site involves C155.

This sequence belongs to the NAGSA dehydrogenase family. Type 1 subfamily.

Its subcellular location is the cytoplasm. It catalyses the reaction N-acetyl-L-glutamate 5-semialdehyde + phosphate + NADP(+) = N-acetyl-L-glutamyl 5-phosphate + NADPH + H(+). It functions in the pathway amino-acid biosynthesis; L-arginine biosynthesis; N(2)-acetyl-L-ornithine from L-glutamate: step 3/4. Its function is as follows. Catalyzes the NADPH-dependent reduction of N-acetyl-5-glutamyl phosphate to yield N-acetyl-L-glutamate 5-semialdehyde. The sequence is that of N-acetyl-gamma-glutamyl-phosphate reductase from Gloeothece citriformis (strain PCC 7424) (Cyanothece sp. (strain PCC 7424)).